A 733-amino-acid polypeptide reads, in one-letter code: Non-secreted LysM effector LCP1 (733 aa).

Positions 1–22 (MMRRPWLLSALVAWVKLPSVQG) are cleaved as a signal peptide. 2 LysM domains span residues 211–256 (SEYT…KLCI) and 261–309 (DVYV…TICI). N-linked (GlcNAc...) asparagine glycosylation is found at Asn-298, Asn-304, Asn-340, Asn-350, Asn-381, Asn-432, Asn-442, Asn-455, and Asn-538. In terms of domain architecture, LysM 3 spans 347–393 (LFHNVTAGDDCGTIGLKYSISLDDFIFLNSMIWPNCTNLWLRASYCV). A compositionally biased stretch (low complexity) spans 605–629 (SPITSSAPTSTTASSKTSSSAAQPT). Residues 605–637 (SPITSSAPTSTTASSKTSSSAAQPTNVSTDGTC) are disordered. N-linked (GlcNAc...) asparagine glycosylation is present at Asn-630. Chitin-binding type-1 domains follow at residues 634–680 (DGTC…KCDA) and 688–733 (DGTC…GVCT). 8 disulfides stabilise this stretch: Cys-637–Cys-654, Cys-645–Cys-660, Cys-653–Cys-667, Cys-671–Cys-678, Cys-691–Cys-708, Cys-699–Cys-714, Cys-707–Cys-721, and Cys-725–Cys-732.

Belongs to the secreted LysM effector family.

It is found in the secreted. It localises to the cell membrane. The protein localises to the vacuole. Functionally, secreted effector that enables the plant pathogenic fungus to manipulate host defenses for successful infection. Not involved in host recognition and penetration but suppresses host cell death and promotes fumonisin biosynthesis while the pathogen colonizes maize kernels. The sequence is that of Non-secreted LysM effector LCP1 from Gibberella moniliformis (strain M3125 / FGSC 7600) (Maize ear and stalk rot fungus).